The following is a 311-amino-acid chain: Phosphopantothenate--cysteine ligase (311 aa).

Residue Ala-2 is modified to N-acetylalanine.

This sequence belongs to the PPC synthetase family. Homodimer.

The enzyme catalyses (R)-4'-phosphopantothenate + L-cysteine + ATP = N-[(R)-4-phosphopantothenoyl]-L-cysteine + AMP + diphosphate + H(+). It carries out the reaction (R)-4'-phosphopantothenate + L-cysteine + CTP = N-[(R)-4-phosphopantothenoyl]-L-cysteine + CMP + diphosphate + H(+). The protein operates within cofactor biosynthesis; coenzyme A biosynthesis; CoA from (R)-pantothenate: step 2/5. Catalyzes the second step in the biosynthesis of coenzyme A from vitamin B5, where cysteine is conjugated to 4'-phosphopantothenate to form 4-phosphopantothenoylcysteine. Has a preference for ATP over CTP as a cosubstrate. This Homo sapiens (Human) protein is Phosphopantothenate--cysteine ligase (PPCS).